Reading from the N-terminus, the 462-residue chain is MEKTMEKIVALAKARGFVYPGSEIYGGLANTWDYGNLGVELKNNVKKAWWTKFIQQNPYNVGVDCAILMNPQTWVASGHLGSFSDPLMDCKECRERFRADKIIEDYATEKNLTLEGSVDAWSHEEMSAYIEKNNIPCPTCGKHNFTDIRQFNLMFKTFQGVTEDAKNTVYLRPETAQGIFVNFKNVQRTSRKKIPFGIGQVGKSFRNEITPGNFTFRTREFEQMELEFFCEPDTDLEWFAYWKQFCIDWLQTLGIKEDEMRVRDHEKEELSFYSKATSDIEFLFPFGWGELWGIADRTDYDLTQHQNVSKEDLSYFDDEKGQRYIPYVIEPSLGADRVTLAFLCAAYDEEEIAEGDVRTVLHFHPAIAPVKIGVLPLSKKLSENAEKIYTDLSKYYNCEFDDRGNIGKRYRRQDEIGTPFCITYDFDSETDGAVTVRDRDTMEQERIKIEDLKAYFEKKFEF.

Substrate-binding residues include Arg98 and Glu174. Residues 206–208, 216–221, 290–291, and 334–337 contribute to the ATP site; these read RNE, FRTREF, EL, and GADR. Residue 221 to 225 participates in substrate binding; the sequence is FEQME. 330 to 334 serves as a coordination point for substrate; it reads EPSLG.

Belongs to the class-II aminoacyl-tRNA synthetase family. Homodimer.

The protein resides in the cytoplasm. It carries out the reaction tRNA(Gly) + glycine + ATP = glycyl-tRNA(Gly) + AMP + diphosphate. Catalyzes the attachment of glycine to tRNA(Gly). This is Glycine--tRNA ligase from Lachnoclostridium phytofermentans (strain ATCC 700394 / DSM 18823 / ISDg) (Clostridium phytofermentans).